Consider the following 1755-residue polypeptide: Transposon Ty1-GR3 Gag-Pol polyprotein (1755 aa).

Polar residues-rich tracts occupy residues 1–10 (MESQQLSNYP), 48–60 (TKANSQQTTTPAS), and 127–152 (QSQFPQYPSSVGTPLSTPSPESGNTF). 3 disordered regions span residues 1–93 (MESQ…MMTQ), 126–173 (PQSQ…RPPP), and 352–421 (GSRN…SKST). Residues 153 to 165 (TDSSSADSDMTST) show a composition bias toward low complexity. Residues 299-401 (NNGIHINNKV…NSKSKTARAH (103 aa)) are RNA-binding. The segment covering 402–418 (NVSTSNNSPSTDNDSIS) has biased composition (low complexity). Ser416 bears the Phosphoserine mark. The active-site For protease activity; shared with dimeric partner is Asp461. Positions 583 to 640 (NVHTSESTRKYPYPFIHRMLAHANAQTIRYSLKNNTITYFNESDVDWSSAIDYQCPDC) are integrase-type zinc finger-like. The Integrase catalytic domain maps to 660–835 (NSYEPFQYLH…AGLDISTLLP (176 aa)). Mg(2+) is bound by residues Asp671 and Asp736. The segment at 956 to 1172 (SKAVSPTDST…LGGIGDSNAY (217 aa)) is disordered. A compositionally biased stretch (low complexity) spans 960-969 (SPTDSTPPST). Polar residues-rich tracts occupy residues 1005-1015 (STPQISNIEST) and 1031-1043 (MSQSNTHESSYAS). Positions 1044-1053 (KSKDFRHSDS) are enriched in basic and acidic residues. Composition is skewed to polar residues over residues 1054-1082 (YSDNETNHTNVPISSTGGTNNKTVPQTSE) and 1095-1106 (SIDTSSSESNSL). The Bipartite nuclear localization signal signature appears at 1178-1212 (KKRSLEDNETEIKVSRDTWNTKNMRSLEPPRSKKR). Positions 1338-1476 (NNYYITQLDI…DILGLEIKYQ (139 aa)) constitute a Reverse transcriptase Ty1/copia-type domain. Residues Asp1346, Asp1427, Asp1428, Asp1610, Glu1652, and Asp1685 each coordinate Mg(2+). Residues 1610 to 1752 (DASYGNQPYY…IKTFKLLTNK (143 aa)) enclose the RNase H Ty1/copia-type domain.

In terms of assembly, the capsid protein forms a homotrimer, from which the VLPs are assembled. The protease is a homodimer, whose active site consists of two apposed aspartic acid residues. Post-translationally, initially, virus-like particles (VLPs) are composed of the structural unprocessed proteins Gag and Gag-Pol, and also contain the host initiator methionine tRNA (tRNA(i)-Met) which serves as a primer for minus-strand DNA synthesis, and a dimer of genomic Ty RNA. Processing of the polyproteins occurs within the particle and proceeds by an ordered pathway, called maturation. First, the protease (PR) is released by autocatalytic cleavage of the Gag-Pol polyprotein yielding capsid protein p45 and a Pol-p154 precursor protein. This cleavage is a prerequisite for subsequent processing of Pol-p154 at the remaining sites to release the mature structural and catalytic proteins. Maturation takes place prior to the RT reaction and is required to produce transposition-competent VLPs.

The protein resides in the cytoplasm. Its subcellular location is the nucleus. The enzyme catalyses DNA(n) + a 2'-deoxyribonucleoside 5'-triphosphate = DNA(n+1) + diphosphate. The catalysed reaction is Endonucleolytic cleavage to 5'-phosphomonoester.. Capsid protein (CA) is the structural component of the virus-like particle (VLP), forming the shell that encapsulates the retrotransposons dimeric RNA genome. The particles are assembled from trimer-clustered units and there are holes in the capsid shells that allow for the diffusion of macromolecules. CA also has nucleocapsid-like chaperone activity, promoting primer tRNA(i)-Met annealing to the multipartite primer-binding site (PBS), dimerization of Ty1 RNA and initiation of reverse transcription. Functionally, the aspartyl protease (PR) mediates the proteolytic cleavages of the Gag and Gag-Pol polyproteins after assembly of the VLP. Its function is as follows. Reverse transcriptase/ribonuclease H (RT) is a multifunctional enzyme that catalyzes the conversion of the retro-elements RNA genome into dsDNA within the VLP. The enzyme displays a DNA polymerase activity that can copy either DNA or RNA templates, and a ribonuclease H (RNase H) activity that cleaves the RNA strand of RNA-DNA heteroduplexes during plus-strand synthesis and hydrolyzes RNA primers. The conversion leads to a linear dsDNA copy of the retrotransposon that includes long terminal repeats (LTRs) at both ends. In terms of biological role, integrase (IN) targets the VLP to the nucleus, where a subparticle preintegration complex (PIC) containing at least integrase and the newly synthesized dsDNA copy of the retrotransposon must transit the nuclear membrane. Once in the nucleus, integrase performs the integration of the dsDNA into the host genome. This is Transposon Ty1-GR3 Gag-Pol polyprotein (TY1B-GR3) from Saccharomyces cerevisiae (strain ATCC 204508 / S288c) (Baker's yeast).